The following is a 274-amino-acid chain: Mitogen-activated protein kinase 4 (274 aa).

ATP contacts are provided by residues 1 to 8 (GCGGNGLV) and lysine 23. The Protein kinase domain maps to 1–274 (GCGGNGLVLS…KILTFSPMDR (274 aa)). Aspartate 123 serves as the catalytic Proton acceptor. A Phosphoserine modification is found at serine 160. Positions 160–162 (SEG) match the SEG motif motif.

Belongs to the protein kinase superfamily. CMGC Ser/Thr protein kinase family. MAP kinase subfamily. In terms of assembly, homodimer. Heterodimer with ERK3/MAPK6. Interacts with MAPKAPK5. Mg(2+) is required as a cofactor. Post-translationally, phosphorylated by PAK1, PAK2 and PAK3 in the activation loop resulting in catalytic activation. Phosphorylated by MAPKAPK5 at other sites. As to expression, exclusively detected in the brain, where expression is restricted to the choroid plexus and hippocampus, and to a lesser extent in lung.

It is found in the cytoplasm. The protein resides in the nucleus. It carries out the reaction L-seryl-[protein] + ATP = O-phospho-L-seryl-[protein] + ADP + H(+). It catalyses the reaction L-threonyl-[protein] + ATP = O-phospho-L-threonyl-[protein] + ADP + H(+). With respect to regulation, activated by phosphorylation in the activation loop. Atypical MAPK protein. Phosphorylates microtubule-associated protein 2 (MAP2) and MAPKAPK5. The precise role of the complex formed with MAPKAPK5 is still unclear, but the complex follows a complex set of phosphorylation events: upon interaction with atypical MAPKAPK5, ERK4/MAPK4 is phosphorylated and then mediates phosphorylation and activation of MAPKAPK5, which in turn phosphorylates ERK4/MAPK4. May promote entry in the cell cycle. This chain is Mitogen-activated protein kinase 4 (Mapk4), found in Rattus norvegicus (Rat).